A 196-amino-acid chain; its full sequence is FMN-dependent NADH:quinone oxidoreductase (196 aa).

Serine 10 contributes to the FMN binding site.

It belongs to the azoreductase type 1 family. Homodimer. It depends on FMN as a cofactor.

The catalysed reaction is 2 a quinone + NADH + H(+) = 2 a 1,4-benzosemiquinone + NAD(+). It catalyses the reaction N,N-dimethyl-1,4-phenylenediamine + anthranilate + 2 NAD(+) = 2-(4-dimethylaminophenyl)diazenylbenzoate + 2 NADH + 2 H(+). In terms of biological role, quinone reductase that provides resistance to thiol-specific stress caused by electrophilic quinones. Its function is as follows. Also exhibits azoreductase activity. Catalyzes the reductive cleavage of the azo bond in aromatic azo compounds to the corresponding amines. In Cereibacter sphaeroides (strain ATCC 17023 / DSM 158 / JCM 6121 / CCUG 31486 / LMG 2827 / NBRC 12203 / NCIMB 8253 / ATH 2.4.1.) (Rhodobacter sphaeroides), this protein is FMN-dependent NADH:quinone oxidoreductase.